The primary structure comprises 429 residues: Enolase (429 aa).

Glutamine 167 contributes to the (2R)-2-phosphoglycerate binding site. Glutamate 209 acts as the Proton donor in catalysis. Mg(2+) is bound by residues aspartate 246, glutamate 289, and aspartate 316. (2R)-2-phosphoglycerate-binding residues include lysine 341, arginine 370, serine 371, and lysine 392. The active-site Proton acceptor is lysine 341.

Belongs to the enolase family. As to quaternary structure, component of the RNA degradosome, a multiprotein complex involved in RNA processing and mRNA degradation. It depends on Mg(2+) as a cofactor.

The protein localises to the cytoplasm. It localises to the secreted. It is found in the cell surface. It catalyses the reaction (2R)-2-phosphoglycerate = phosphoenolpyruvate + H2O. The protein operates within carbohydrate degradation; glycolysis; pyruvate from D-glyceraldehyde 3-phosphate: step 4/5. Catalyzes the reversible conversion of 2-phosphoglycerate (2-PG) into phosphoenolpyruvate (PEP). It is essential for the degradation of carbohydrates via glycolysis. This is Enolase from Pseudomonas aeruginosa (strain LESB58).